A 328-amino-acid chain; its full sequence is Formimidoylglutamase (328 aa).

Mn(2+)-binding residues include histidine 133, aspartate 159, histidine 161, aspartate 163, aspartate 253, and aspartate 255.

This sequence belongs to the arginase family. Mn(2+) is required as a cofactor.

The catalysed reaction is N-formimidoyl-L-glutamate + H2O = formamide + L-glutamate. It functions in the pathway amino-acid degradation; L-histidine degradation into L-glutamate; L-glutamate from N-formimidoyl-L-glutamate (hydrolase route): step 1/1. Its function is as follows. Catalyzes the conversion of N-formimidoyl-L-glutamate to L-glutamate and formamide. The protein is Formimidoylglutamase of Streptococcus pyogenes serotype M6 (strain ATCC BAA-946 / MGAS10394).